Here is a 396-residue protein sequence, read N- to C-terminus: Elongation factor Tu (396 aa).

In terms of domain architecture, tr-type G spans 11 to 205; sequence KPHVNIGTIG…IVDEYIPTPE (195 aa). The segment at 20–27 is G1; it reads GHVDHGKT. 20–27 lines the GTP pocket; the sequence is GHVDHGKT. Threonine 27 is a Mg(2+) binding site. The interval 61 to 65 is G2; that stretch reads GITIN. Positions 82 to 85 are G3; it reads DAPG. Residues 82-86 and 137-140 each bind GTP; these read DAPGH and NKCD. The interval 137 to 140 is G4; that stretch reads NKCD. The segment at 175-177 is G5; it reads SAL.

It belongs to the TRAFAC class translation factor GTPase superfamily. Classic translation factor GTPase family. EF-Tu/EF-1A subfamily. In terms of assembly, monomer.

It is found in the cytoplasm. The catalysed reaction is GTP + H2O = GDP + phosphate + H(+). In terms of biological role, GTP hydrolase that promotes the GTP-dependent binding of aminoacyl-tRNA to the A-site of ribosomes during protein biosynthesis. In Lactobacillus acidophilus (strain ATCC 700396 / NCK56 / N2 / NCFM), this protein is Elongation factor Tu.